Consider the following 188-residue polypeptide: MSIKSDKWIRRMSEEFGMIDPFEPNQIKEADGQRIISYGTSSYGYDIRCANEFKIFTNINSTIVDPKNFDPKNFVTVEDDCCIIPPNSFALARTVEYFRIPRNVLTVCLGKSTYARCGIIVNVTPFEPEWEGYVTLEFSNTTPLPAKIYAGEGVAQVLFFESDEVCETSYKDRNGKYMGQTGVTLPKA.

DCTP is bound by residues 111–116 (KSTYAR), 135–137 (TLE), Gln-156, Tyr-170, and Gln-180. Glu-137 (proton donor/acceptor) is an active-site residue.

This sequence belongs to the dCTP deaminase family. As to quaternary structure, homotrimer.

The catalysed reaction is dCTP + H2O + H(+) = dUTP + NH4(+). Its pathway is pyrimidine metabolism; dUMP biosynthesis; dUMP from dCTP (dUTP route): step 1/2. Its function is as follows. Catalyzes the deamination of dCTP to dUTP. The sequence is that of dCTP deaminase from Neisseria gonorrhoeae (strain ATCC 700825 / FA 1090).